A 156-amino-acid chain; its full sequence is Small ribosomal subunit protein uS7 (156 aa).

Belongs to the universal ribosomal protein uS7 family. Part of the 30S ribosomal subunit. Contacts proteins S9 and S11.

Functionally, one of the primary rRNA binding proteins, it binds directly to 16S rRNA where it nucleates assembly of the head domain of the 30S subunit. Is located at the subunit interface close to the decoding center, probably blocks exit of the E-site tRNA. The chain is Small ribosomal subunit protein uS7 from Chromohalobacter salexigens (strain ATCC BAA-138 / DSM 3043 / CIP 106854 / NCIMB 13768 / 1H11).